The following is a 147-amino-acid chain: Echinoidin (147 aa).

Residues 1 to 143 (GCCPTFWTSF…STRHYLICKL (143 aa)) enclose the C-type lectin domain. 3 disulfide bridges follow: cysteine 3–cysteine 14, cysteine 31–cysteine 141, and cysteine 116–cysteine 132. The O-linked (Hex) serine glycan is linked to serine 38. The Cell attachment site motif lies at 39–41 (RGD).

As to quaternary structure, homodimer; disulfide-linked. In terms of processing, the identity of the saccharide is not reported in PubMed:3571253, and it is unlikely to be N-acetylgalactosamine. The sugar attached to Ser-38 is represented simply as Hex. Coelemic fluid.

Its subcellular location is the secreted. Functionally, role in the defense system of the organism against microorganisms. This lectin is specific for Gal-GalNAc. This is Echinoidin from Heliocidaris crassispina (Sea urchin).